The primary structure comprises 205 residues: Proteasome subunit beta type-3 (205 aa).

The protein belongs to the peptidase T1B family. The 26S proteasome consists of a 20S proteasome core and two 19S regulatory subunits. The 20S proteasome core is composed of 28 subunits that are arranged in four stacked rings, resulting in a barrel-shaped structure. The two end rings are each formed by seven alpha subunits, and the two central rings are each formed by seven beta subunits. The catalytic chamber with the active sites is on the inside of the barrel.

Its subcellular location is the cytoplasm. The protein resides in the nucleus. Functionally, non-catalytic component of the proteasome, a multicatalytic proteinase complex which is characterized by its ability to cleave peptides with Arg, Phe, Tyr, Leu, and Glu adjacent to the leaving group at neutral or slightly basic pH. The proteasome has an ATP-dependent proteolytic activity. In Oncorhynchus mykiss (Rainbow trout), this protein is Proteasome subunit beta type-3 (psmb3).